Consider the following 104-residue polypeptide: DNA-directed RNA polymerase subunit omega (104 aa).

Residues 76-104 (IEEEKRRKEEEEKKIKEQIAKEKEDGEKI) form a disordered region.

It belongs to the RNA polymerase subunit omega family. In terms of assembly, the RNAP catalytic core consists of 2 alpha, 1 beta, 1 beta' and 1 omega subunit. When a sigma factor is associated with the core the holoenzyme is formed, which can initiate transcription.

It catalyses the reaction RNA(n) + a ribonucleoside 5'-triphosphate = RNA(n+1) + diphosphate. Its function is as follows. Promotes RNA polymerase assembly. Latches the N- and C-terminal regions of the beta' subunit thereby facilitating its interaction with the beta and alpha subunits. This is DNA-directed RNA polymerase subunit omega from Streptococcus pneumoniae (strain CGSP14).